The chain runs to 82 residues: Immediate early response 3-interacting protein 1 (82 aa).

2 helical membrane-spanning segments follow: residues 2–22 (AFTL…VAVL) and 62–82 (VMRV…LLFG).

Belongs to the YOS1 family.

The protein resides in the endoplasmic reticulum membrane. Regulator of endoplasmic reticulum secretion that acts as a key determinant of brain size. Required for secretion of extracellular matrix proteins. Required for correct brain development by depositing sufficient extracellular matrix proteins for tissue integrity and the proliferation of neural progenitors. Acts as a regulator of the unfolded protein response (UPR). The chain is Immediate early response 3-interacting protein 1 from Xenopus laevis (African clawed frog).